The primary structure comprises 140 residues: MRTLGLDVGTKTIGIAVSDALGWTAQGLETWRRSDANEQADFEHIASLVKEHEVTTIVIGLPKNMDGSIGPSGERSETFAAELRRYVPCEIVMWDERLTTTAAERMLISADVSRKKRKSVIDKMAAVMILQGYLDRQQLK.

Belongs to the YqgF nuclease family.

It localises to the cytoplasm. Could be a nuclease involved in processing of the 5'-end of pre-16S rRNA. This Halalkalibacterium halodurans (strain ATCC BAA-125 / DSM 18197 / FERM 7344 / JCM 9153 / C-125) (Bacillus halodurans) protein is Putative pre-16S rRNA nuclease.